The chain runs to 264 residues: Low molecular mass lipoprotein PBMHPC-23 (264 aa).

The first 23 residues, 1–23 (MKFLVVFAVVRACVTPACAEMSA), serve as a signal peptide directing secretion.

Belongs to the 30 kDa lipoprotein family.

It is found in the secreted. The polypeptide is Low molecular mass lipoprotein PBMHPC-23 (Bombyx mori (Silk moth)).